A 666-amino-acid chain; its full sequence is Heparin-sulfate lyase (666 aa).

The N-terminal stretch at 1-22 is a signal peptide; the sequence is MNKTFKYIVLLALACFVGKANA. The active-site Proton acceptor is tyrosine 301.

The protein belongs to the polysaccharide lyase 12 family.

It is found in the periplasm. It carries out the reaction Elimination of sulfate, appears to act on linkages between N-acetyl-D-glucosamine and uronate. Product is an unsaturated sugar.. In terms of biological role, specifically cleaves heparan sulfate-rich regions of acidic polysaccharides. Also able to degrade heparin and hyaluronic acid. Does not act on N,O-desulfated glucosamine or N-acetyl-O-sulfated glucosamine linkages. Functions in cleaving metazoan heparan sulfate and providing carbon, nitrogen and sulfate sources for microorganisms. This chain is Heparin-sulfate lyase (hepC), found in Bacteroides stercoris.